Reading from the N-terminus, the 352-residue chain is Phosphoribosylformylglycinamidine cyclo-ligase (352 aa).

Belongs to the AIR synthase family.

The protein localises to the cytoplasm. The catalysed reaction is 2-formamido-N(1)-(5-O-phospho-beta-D-ribosyl)acetamidine + ATP = 5-amino-1-(5-phospho-beta-D-ribosyl)imidazole + ADP + phosphate + H(+). It participates in purine metabolism; IMP biosynthesis via de novo pathway; 5-amino-1-(5-phospho-D-ribosyl)imidazole from N(2)-formyl-N(1)-(5-phospho-D-ribosyl)glycinamide: step 2/2. The chain is Phosphoribosylformylglycinamidine cyclo-ligase from Pseudomonas savastanoi pv. phaseolicola (strain 1448A / Race 6) (Pseudomonas syringae pv. phaseolicola (strain 1448A / Race 6)).